Reading from the N-terminus, the 602-residue chain is Elongation factor 4 (602 aa).

The tr-type G domain occupies D6–G188. GTP contacts are provided by residues D18 to T23 and N135 to D138.

It belongs to the TRAFAC class translation factor GTPase superfamily. Classic translation factor GTPase family. LepA subfamily.

The protein localises to the cell membrane. The catalysed reaction is GTP + H2O = GDP + phosphate + H(+). Its function is as follows. Required for accurate and efficient protein synthesis under certain stress conditions. May act as a fidelity factor of the translation reaction, by catalyzing a one-codon backward translocation of tRNAs on improperly translocated ribosomes. Back-translocation proceeds from a post-translocation (POST) complex to a pre-translocation (PRE) complex, thus giving elongation factor G a second chance to translocate the tRNAs correctly. Binds to ribosomes in a GTP-dependent manner. This is Elongation factor 4 from Pelotomaculum thermopropionicum (strain DSM 13744 / JCM 10971 / SI).